The following is a 287-amino-acid chain: IQ domain-containing protein K (287 aa).

In Homo sapiens (Human), this protein is IQ domain-containing protein K (IQCK).